Consider the following 794-residue polypeptide: Glutamine--tRNA ligase (794 aa).

The segment at 192–217 (DNEKPKKKKEKPAKVEDKAAPVATSE) is disordered. Residues 277–287 (PEPNGYLHIGH) carry the 'HIGH' region motif. ATP is bound by residues 278-280 (EPN) and 284-290 (HIGHAKA). Positions 310 and 450 each coordinate L-glutamine. ATP is bound by residues T469, 498–499 (RL), and 506–508 (MSK). Residues 505-509 (VMSKR) carry the 'KMSKS' region motif.

The protein belongs to the class-I aminoacyl-tRNA synthetase family.

The catalysed reaction is tRNA(Gln) + L-glutamine + ATP = L-glutaminyl-tRNA(Gln) + AMP + diphosphate. The polypeptide is Glutamine--tRNA ligase (Lupinus luteus (European yellow lupine)).